Here is a 309-residue protein sequence, read N- to C-terminus: Enoyl-CoA hydratase 2, peroxisomal (309 aa).

Residues 95–96, K124, 208–213, G231, and F261 contribute to the substrate site; these read HG and DYNPLH. The MaoC-like domain occupies 183 to 295; sequence PQRQPLTVCE…TKVKERNKTV (113 aa). Positions 307 to 309 match the Microbody targeting signal motif; the sequence is SSL.

Ubiquitous.

Its subcellular location is the peroxisome. It catalyses the reaction a (3R)-3-hydroxyacyl-CoA = a (2E)-enoyl-CoA + H2O. It functions in the pathway lipid metabolism; fatty acid beta-oxidation. Bidirectional monofunctional enoyl-CoA hydratase 2 involved in the degradation of even cis-unsaturated fatty acids. Devoid of 3-hydroxyacyl-CoA dehydrogenase activity. This chain is Enoyl-CoA hydratase 2, peroxisomal (ECH2), found in Arabidopsis thaliana (Mouse-ear cress).